The sequence spans 148 residues: Lysozyme C-1 (148 aa).

Positions 1-18 (MKALLVLGFLLLSASVQA) are cleaved as a signal peptide. The C-type lysozyme domain maps to 19–148 (KIYERCQFAR…LSGYIRNCGV (130 aa)). Cystine bridges form between cysteine 24/cysteine 146, cysteine 48/cysteine 134, cysteine 83/cysteine 99, and cysteine 95/cysteine 113. Active-site residues include glutamate 53 and aspartate 71.

It belongs to the glycosyl hydrolase 22 family. Monomer. As to expression, expressed in lung, small intestine and spleen.

It localises to the secreted. It carries out the reaction Hydrolysis of (1-&gt;4)-beta-linkages between N-acetylmuramic acid and N-acetyl-D-glucosamine residues in a peptidoglycan and between N-acetyl-D-glucosamine residues in chitodextrins.. Functionally, lysozymes have primarily a bacteriolytic function; those in tissues and body fluids are associated with the monocyte-macrophage system and enhance the activity of immunoagents. In the intestine they may also have a digestive function. The chain is Lysozyme C-1 (Lyz1) from Rattus norvegicus (Rat).